We begin with the raw amino-acid sequence, 291 residues long: 4-diphosphocytidyl-2-C-methyl-D-erythritol kinase (291 aa).

The active site involves Lys11. 94-104 serves as a coordination point for ATP; the sequence is PAGSGLGGGSA. Residue Asp136 is part of the active site.

It belongs to the GHMP kinase family. IspE subfamily.

The enzyme catalyses 4-CDP-2-C-methyl-D-erythritol + ATP = 4-CDP-2-C-methyl-D-erythritol 2-phosphate + ADP + H(+). Its pathway is isoprenoid biosynthesis; isopentenyl diphosphate biosynthesis via DXP pathway; isopentenyl diphosphate from 1-deoxy-D-xylulose 5-phosphate: step 3/6. Functionally, catalyzes the phosphorylation of the position 2 hydroxy group of 4-diphosphocytidyl-2C-methyl-D-erythritol. In Treponema pallidum (strain Nichols), this protein is 4-diphosphocytidyl-2-C-methyl-D-erythritol kinase.